We begin with the raw amino-acid sequence, 405 residues long: MAVGLGPLPTLHPVPGFELGIASAGIKRPGRKDVVVMRCAEGSSVAGVFTLNAFCAAPVILSKQRVQGTVRYLLTNTGNANAGTGAPGLAAAERTCAKLAELAGVPAESVLPFSTGVIGEPLPVEKIEGALQAALDNLSENNWAEAATGIMTTDTLPKGASRQFQHDGVTVTVTGISKGAGMIRPNMATMLGYIATDAKVAPKVLKDLMLDGANKSFNRITIDGDTSTNDCCMLIATGKADLPEVTEASGALFEALKKAVFEVCMEVAQAIVRDGEGATKFVTVQVNGGGNHQECLDVGYAVAHSPLIKTALFASDPNWGRILAAVGRAGVPELDVSLIDVYLDSVCIASKGGRSPSYTEAQGSAVMAQEEITIRIELGRGQCSETIWTTDLSHEYVKINAEYRT.

Thr152, Lys178, Thr189, Glu276, Asn400, and Thr405 together coordinate substrate. The active-site Nucleophile is Thr189.

Belongs to the ArgJ family. Heterotetramer of two alpha and two beta chains.

The protein resides in the cytoplasm. The catalysed reaction is N(2)-acetyl-L-ornithine + L-glutamate = N-acetyl-L-glutamate + L-ornithine. The enzyme catalyses L-glutamate + acetyl-CoA = N-acetyl-L-glutamate + CoA + H(+). It functions in the pathway amino-acid biosynthesis; L-arginine biosynthesis; L-ornithine and N-acetyl-L-glutamate from L-glutamate and N(2)-acetyl-L-ornithine (cyclic): step 1/1. It participates in amino-acid biosynthesis; L-arginine biosynthesis; N(2)-acetyl-L-ornithine from L-glutamate: step 1/4. Its function is as follows. Catalyzes two activities which are involved in the cyclic version of arginine biosynthesis: the synthesis of N-acetylglutamate from glutamate and acetyl-CoA as the acetyl donor, and of ornithine by transacetylation between N(2)-acetylornithine and glutamate. This is Arginine biosynthesis bifunctional protein ArgJ from Pseudomonas putida (strain ATCC 47054 / DSM 6125 / CFBP 8728 / NCIMB 11950 / KT2440).